Consider the following 564-residue polypeptide: MAGKPGIQLFVIFLLLSSFAAVVWAMDNMPADKDVSKLFPLTLIHINDLHARFDETNMKSNACTAKDQCIAGIARVYQKIQDLLKEYKSKNAIYLNAGDNFQGTLWYNLLRWQVTADFITKLKPTAMTLGNHEFDHTPKGLAPYLAELDKAGIPTLVANLVMNDDPDLKSSKIQKSIKVTVGGKTIGIIGVLYDKTHEIAQTGKVTLSNAVETVKREAAALKKDKVDIIVVLSHCSYDEDKKIAKEAGQDIDVIVGAHSHSFLYSKESNKPYDQKDKIEGPYPTIVESNNKRKIPIVQAKSFGKYVGRLTLYFDNEGEVKHWEGYPEFIDNKVKQDPKILEALIPWRKKVQEIGSTKVGETTIELDRDSCRDKECTLGVLYADAFADHYTNSSFRPFAIIQAGNFRNPIKVGKITNGDIIEAAPFGSTADLIRLKGDNLWAVAEHSLALDDENRTNCLQVSGLRIVIDPSKSVGSRVVKIDVMDNRNPKSEDLKPLDRNAEYFIALPSYLADGKDGFSAMKEATARWTGPLDSDVFKSYVEKIKKVDKLKLDRVIVCKAGSPCT.

Residues 1 to 25 form the signal peptide; that stretch reads MAGKPGIQLFVIFLLLSSFAAVVWA. A divalent metal cation-binding residues include Asp-48, His-50, Asp-99, Asn-131, His-234, and His-258. Arg-371 contacts AMP. A glycan (N-linked (GlcNAc...) asparagine) is linked at Asn-391. AMP is bound by residues Arg-406, Phe-425, and Asp-515.

The protein belongs to the 5'-nucleotidase family. A divalent metal cation serves as cofactor. In terms of tissue distribution, female salivary gland (at protein level). Low-level expression in male tissues. Not detected in female carcasses without salivary glands.

The protein localises to the secreted. It carries out the reaction a ribonucleoside 5'-triphosphate + 2 H2O = a ribonucleoside 5'-phosphate + 2 phosphate + 2 H(+). Facilitates hematophagy by inhibiting ADP-dependent platelet aggregation in the host. Cleaves adenosine triphosphate (ATP) and adenosine diphosphate (ADP) to adenosine monophosphate (AMP) and inorganic phosphate. May reduce probing time by facilitating the speed of locating blood. This chain is Apyrase, found in Aedes albopictus (Asian tiger mosquito).